Here is a 466-residue protein sequence, read N- to C-terminus: Argininosuccinate lyase (466 aa).

2-(N(omega)-L-arginino)succinate is bound by residues S27, N114, and T159. The Proton acceptor role is filled by H160. The Proton donor role is filled by S281. 2-(N(omega)-L-arginino)succinate-binding residues include N289, Y321, Q326, and K329.

Belongs to the lyase 1 family. Argininosuccinate lyase subfamily. In terms of assembly, homotetramer. Eye lens.

It catalyses the reaction 2-(N(omega)-L-arginino)succinate = fumarate + L-arginine. It participates in amino-acid biosynthesis; L-arginine biosynthesis; L-arginine from L-ornithine and carbamoyl phosphate: step 3/3. Delta crystallin, the principal crystallin in embryonic lens, is found only in birds and reptiles. This protein also functions as an enzymatically active argininosuccinate lyase. The polypeptide is Argininosuccinate lyase (ASL) (Anser anser anser (Western greylag goose)).